The primary structure comprises 441 residues: Ribulose bisphosphate carboxylase large chain (441 aa).

Lysine 5 bears the N6,N6,N6-trimethyllysine mark. Substrate is bound by residues asparagine 114 and threonine 164. Residue lysine 166 is the Proton acceptor of the active site. Position 168 (lysine 168) interacts with substrate. Mg(2+) contacts are provided by lysine 192, aspartate 194, and glutamate 195. The residue at position 192 (lysine 192) is an N6-carboxylysine. Residue histidine 285 is the Proton acceptor of the active site. Positions 286, 318, and 370 each coordinate substrate.

It belongs to the RuBisCO large chain family. Type I subfamily. As to quaternary structure, heterohexadecamer of 8 large chains and 8 small chains; disulfide-linked. The disulfide link is formed within the large subunit homodimers. It depends on Mg(2+) as a cofactor. In terms of processing, the disulfide bond which can form in the large chain dimeric partners within the hexadecamer appears to be associated with oxidative stress and protein turnover.

Its subcellular location is the plastid. It is found in the chloroplast. It carries out the reaction 2 (2R)-3-phosphoglycerate + 2 H(+) = D-ribulose 1,5-bisphosphate + CO2 + H2O. It catalyses the reaction D-ribulose 1,5-bisphosphate + O2 = 2-phosphoglycolate + (2R)-3-phosphoglycerate + 2 H(+). Functionally, ruBisCO catalyzes two reactions: the carboxylation of D-ribulose 1,5-bisphosphate, the primary event in carbon dioxide fixation, as well as the oxidative fragmentation of the pentose substrate in the photorespiration process. Both reactions occur simultaneously and in competition at the same active site. The protein is Ribulose bisphosphate carboxylase large chain of Drosera dichrosepala (Rusty sundew).